The primary structure comprises 214 residues: Potassium-transporting ATPase KdpC subunit (214 aa).

The helical transmembrane segment at 17-37 threads the bilayer; that stretch reads LWVITALIYPFSMIAIGQILF.

The protein belongs to the KdpC family. As to quaternary structure, the system is composed of three essential subunits: KdpA, KdpB and KdpC.

It localises to the cell inner membrane. Functionally, part of the high-affinity ATP-driven potassium transport (or Kdp) system, which catalyzes the hydrolysis of ATP coupled with the electrogenic transport of potassium into the cytoplasm. This subunit acts as a catalytic chaperone that increases the ATP-binding affinity of the ATP-hydrolyzing subunit KdpB by the formation of a transient KdpB/KdpC/ATP ternary complex. In Microcystis aeruginosa (strain NIES-843 / IAM M-2473), this protein is Potassium-transporting ATPase KdpC subunit.